A 275-amino-acid polypeptide reads, in one-letter code: Homeobox protein Hox-C12a (275 aa).

2 disordered regions span residues 101 to 129 and 148 to 213; these read SRENCSGGGSLKREDRARDTSALTSDHGM and QLTQ…KRKP. Low complexity predominate over residues 155-177; the sequence is SCQSMESDSSSSLLNEASKPSSS. The span at 178 to 194 shows a compositional bias: polar residues; the sequence is DTQTLVSPGSHTGTITA. Residues 207-266 constitute a DNA-binding region (homeobox); the sequence is TRKKRKPYSKLQLAELEGEFMMNEFITRQRRRELSDRLNLSDQQVKIWFQNRRMKKKRLM.

Belongs to the Abd-B homeobox family.

It localises to the nucleus. Its function is as follows. Sequence-specific transcription factor which is part of a developmental regulatory system that provides cells with specific positional identities on the anterior-posterior axis. This is Homeobox protein Hox-C12a (hoxc12a) from Takifugu rubripes (Japanese pufferfish).